The sequence spans 236 residues: GCN5-related N-acetyltransferase 8 (236 aa).

The 140-residue stretch at Ala-96–Asn-235 folds into the N-acetyltransferase domain. Residues Ile-161 to Val-163, Arg-169 to Ser-174, Asn-200 to Asn-202, and Tyr-207 contribute to the acetyl-CoA site. Tyr-207 (proton donor) is an active-site residue.

The protein belongs to the acetyltransferase family. GNAT subfamily. As to quaternary structure, oligomer. Expressed throughout the plant.

The protein resides in the cytoplasm. It is found in the nucleus. The catalysed reaction is an N-terminal L-alpha-aminoacyl-[protein] + acetyl-CoA = N-terminal N(alpha)-acetyl-L-alpha-aminoacyl-[protein] + CoA + H(+). The enzyme catalyses L-lysyl-[protein] + acetyl-CoA = N(6)-acetyl-L-lysyl-[protein] + CoA + H(+). Probable protein acetyltransferase with dual specificity triggering both N-alpha-acetylation (NTA) and epsilon-lysine acetylation (KA). This is GCN5-related N-acetyltransferase 8 from Arabidopsis thaliana (Mouse-ear cress).